The sequence spans 567 residues: Pyruvate decarboxylase (567 aa).

Pyruvate contacts are provided by Asp28 and His117. Thiamine diphosphate-binding positions include Thr393 and 416 to 418; that span reads GSI. Asp447 is a binding site for Mg(2+). Thiamine diphosphate contacts are provided by residues 448 to 449 and 475 to 480; these read GS and NDGYTI. Residues Asn475 and Gly477 each coordinate Mg(2+). Glu481 contributes to the pyruvate binding site.

The protein belongs to the TPP enzyme family. Homotetramer. Mg(2+) is required as a cofactor. It depends on thiamine diphosphate as a cofactor.

Its subcellular location is the cytoplasm. It catalyses the reaction a 2-oxocarboxylate + H(+) = an aldehyde + CO2. The enzyme catalyses pyruvate + H(+) = acetaldehyde + CO2. In Candida albicans (strain SC5314 / ATCC MYA-2876) (Yeast), this protein is Pyruvate decarboxylase (PDC11).